Consider the following 354-residue polypeptide: Chorismate synthase (354 aa).

Arginine 48 lines the NADP(+) pocket. FMN-binding positions include 125 to 127 (RAS), alanine 280, 295 to 299 (KPIPS), and arginine 321.

The protein belongs to the chorismate synthase family. In terms of assembly, homotetramer. FMNH2 serves as cofactor.

It carries out the reaction 5-O-(1-carboxyvinyl)-3-phosphoshikimate = chorismate + phosphate. Its pathway is metabolic intermediate biosynthesis; chorismate biosynthesis; chorismate from D-erythrose 4-phosphate and phosphoenolpyruvate: step 7/7. Catalyzes the anti-1,4-elimination of the C-3 phosphate and the C-6 proR hydrogen from 5-enolpyruvylshikimate-3-phosphate (EPSP) to yield chorismate, which is the branch point compound that serves as the starting substrate for the three terminal pathways of aromatic amino acid biosynthesis. This reaction introduces a second double bond into the aromatic ring system. In Syntrophus aciditrophicus (strain SB), this protein is Chorismate synthase.